A 131-amino-acid polypeptide reads, in one-letter code: Maturin (131 aa).

Tyr-34 bears the Phosphotyrosine mark. The span at 107 to 120 (FEEYSADVEEEEPE) shows a compositional bias: acidic residues. The disordered stretch occupies residues 107 to 131 (FEEYSADVEEEEPEADHPQMGVSQQ).

The protein belongs to the MTURN family. In terms of processing, phosphorylation at Tyr-34 is essential for its ability to promote megakaryocyte differentiation.

Its subcellular location is the cytoplasm. Its function is as follows. Promotes megakaryocyte differentiation by enhancing ERK and JNK signaling as well as up-regulating RUNX1 and FLI1 expression. Represses NF-kappa-B transcriptional activity by inhibiting phosphorylation of RELA at 'Ser- 536'. May be involved in early neuronal development. The protein is Maturin (Mturn) of Rattus norvegicus (Rat).